The sequence spans 388 residues: Chorismate synthase (388 aa).

NADP(+)-binding residues include arginine 39 and arginine 45. FMN-binding positions include 130 to 132, 251 to 252, glycine 296, 311 to 315, and arginine 337; these read RSS, NA, and KPIPT.

Belongs to the chorismate synthase family. Homotetramer. Requires FMNH2 as cofactor.

The catalysed reaction is 5-O-(1-carboxyvinyl)-3-phosphoshikimate = chorismate + phosphate. Its pathway is metabolic intermediate biosynthesis; chorismate biosynthesis; chorismate from D-erythrose 4-phosphate and phosphoenolpyruvate: step 7/7. Catalyzes the anti-1,4-elimination of the C-3 phosphate and the C-6 proR hydrogen from 5-enolpyruvylshikimate-3-phosphate (EPSP) to yield chorismate, which is the branch point compound that serves as the starting substrate for the three terminal pathways of aromatic amino acid biosynthesis. This reaction introduces a second double bond into the aromatic ring system. The protein is Chorismate synthase of Streptococcus mutans serotype c (strain ATCC 700610 / UA159).